A 588-amino-acid chain; its full sequence is Myc box-dependent-interacting protein 1 (588 aa).

Residue Ala2 is modified to N-acetylalanine. The interaction with BIN2 stretch occupies residues 2 to 122 (AEMGSKGVTA…DYHQKLVDQA (121 aa)). 2 coiled-coil regions span residues 15-42 (ASNV…TKDE) and 193-274 (HLVA…EKQH). The BAR domain occupies 29–276 (VLQKLGKADE…LVSLEKQHGS (248 aa)). The tract at residues 279 to 355 (FTVKAQPSDS…PKHTPSKEMK (77 aa)) is disordered. Phosphoserine is present on residues Ser296, Ser298, and Ser304. At Thr308 the chain carries Phosphothreonine. Phosphoserine is present on residues Ser324 and Ser332. A clathrin-binding region spans residues 379-422 (FEAPGPFSEQASLLDLDFEPLPPVASPVKAPTPSGQSIPWDLWE). Positions 448-483 (PSQTAEPGPAQPAEASEVVGGTQEPGETAASEATSS) are disordered. A compositionally biased stretch (low complexity) spans 474–483 (ETAASEATSS). In terms of domain architecture, SH3 spans 515 to 588 (GFMFKVQAQH…FPENFTERVQ (74 aa)).

In terms of assembly, heterodimer with AMPH. Binds SH3GLB1. Interacts (via SH3 domain) with DNM1. Interacts with SYNJ1. Interacts (via SH3 domain) with DNM2. Interacts with CLTC. Interacts with AP2A2. Interacts with AP2B1. Interacts with MYC (via N-terminal transactivation domain); the interaction requires the integrity of the conserved MYC box regions 1 and 2. Interacts with BIN2. Interacts with SNX4. Interacts (via BAR domain) with BACE1. Binds (via BAR domain) F-actin. In terms of processing, phosphorylated by protein kinase C. In terms of tissue distribution, highly expressed in the brain and muscle. Isoform AMPH2-1 is expressed only in the brain where it is concentrated in axon initial segments and nodes of Ranvier. Isoform AMPH2-2 is widely expressed.

The protein resides in the nucleus. The protein localises to the cytoplasm. It localises to the endosome. It is found in the cell membrane. Its subcellular location is the sarcolemma. The protein resides in the T-tubule. Is a key player in the control of plasma membrane curvature, and membrane shaping and remodeling. Required in muscle cells for the formation of T-tubules, tubular invaginations of the plasma membrane that function in depolarization-contraction coupling. Required in muscle cells for the formation of T-tubules, tubular invaginations of the plasma membrane that function in depolarization-contraction coupling. Is a negative regulator of endocytosis. Is also involved in the regulation of intracellular vesicles sorting, modulation of BACE1 trafficking and the control of amyloid-beta production. In neuronal circuits, endocytosis regulation may influence the internalization of PHF-tau aggregates. May be involved in the regulation of MYC activity and the control cell proliferation. The chain is Myc box-dependent-interacting protein 1 (Bin1) from Rattus norvegicus (Rat).